The following is a 400-amino-acid chain: Peptidase M20 domain-containing protein C757.05c (400 aa).

The first 25 residues, 1–25 (MTMKISVWSLLIVIGYHLWMSPVLA), serve as a signal peptide directing secretion. An N-linked (GlcNAc...) asparagine glycan is attached at Asn80. Residue Asp152 coordinates Zn(2+). Glu186 (proton acceptor) is an active-site residue. Residue Glu187 participates in Zn(2+) binding.

It belongs to the peptidase M20A family. It depends on Zn(2+) as a cofactor.

The protein resides in the secreted. The sequence is that of Peptidase M20 domain-containing protein C757.05c from Schizosaccharomyces pombe (strain 972 / ATCC 24843) (Fission yeast).